The chain runs to 99 residues: UPF0751 protein BAMEG_A0107 (99 aa).

This sequence belongs to the UPF0751 family.

The polypeptide is UPF0751 protein BAMEG_A0107 (Bacillus anthracis (strain CDC 684 / NRRL 3495)).